The chain runs to 514 residues: 3-octaprenyl-4-hydroxybenzoate carboxy-lyase (514 aa).

Residue asparagine 177 participates in Mn(2+) binding. Residues 180-182 (IYR), 194-196 (RWL), and 199-200 (RG) each bind prenylated FMN. Position 243 (glutamate 243) interacts with Mn(2+). Residue aspartate 314 is the Proton donor of the active site.

Belongs to the UbiD family. In terms of assembly, homohexamer. Requires prenylated FMN as cofactor. It depends on Mn(2+) as a cofactor.

Its subcellular location is the cell membrane. The catalysed reaction is a 4-hydroxy-3-(all-trans-polyprenyl)benzoate + H(+) = a 2-(all-trans-polyprenyl)phenol + CO2. The protein operates within cofactor biosynthesis; ubiquinone biosynthesis. Functionally, catalyzes the decarboxylation of 3-octaprenyl-4-hydroxy benzoate to 2-octaprenylphenol, an intermediate step in ubiquinone biosynthesis. This is 3-octaprenyl-4-hydroxybenzoate carboxy-lyase from Bordetella pertussis (strain Tohama I / ATCC BAA-589 / NCTC 13251).